The following is a 93-amino-acid chain: MTELLAVEEINQRISQISDWKLEGNKLKYIKTVKNFVEAINFVNKLVAPAEASQHHPDLEVSYNKVTIILTTHNSGGLTEKDFKMAKTISGLS.

Belongs to the pterin-4-alpha-carbinolamine dehydratase family.

It catalyses the reaction (4aS,6R)-4a-hydroxy-L-erythro-5,6,7,8-tetrahydrobiopterin = (6R)-L-erythro-6,7-dihydrobiopterin + H2O. In Trichodesmium erythraeum (strain IMS101), this protein is Putative pterin-4-alpha-carbinolamine dehydratase.